A 185-amino-acid chain; its full sequence is ATP synthase subunit delta (185 aa).

The protein belongs to the ATPase delta chain family. As to quaternary structure, F-type ATPases have 2 components, F(1) - the catalytic core - and F(0) - the membrane proton channel. F(1) has five subunits: alpha(3), beta(3), gamma(1), delta(1), epsilon(1). F(0) has three main subunits: a(1), b(2) and c(10-14). The alpha and beta chains form an alternating ring which encloses part of the gamma chain. F(1) is attached to F(0) by a central stalk formed by the gamma and epsilon chains, while a peripheral stalk is formed by the delta and b chains.

The protein localises to the cell inner membrane. Functionally, f(1)F(0) ATP synthase produces ATP from ADP in the presence of a proton or sodium gradient. F-type ATPases consist of two structural domains, F(1) containing the extramembraneous catalytic core and F(0) containing the membrane proton channel, linked together by a central stalk and a peripheral stalk. During catalysis, ATP synthesis in the catalytic domain of F(1) is coupled via a rotary mechanism of the central stalk subunits to proton translocation. Its function is as follows. This protein is part of the stalk that links CF(0) to CF(1). It either transmits conformational changes from CF(0) to CF(1) or is implicated in proton conduction. The polypeptide is ATP synthase subunit delta (Coxiella burnetii (strain CbuG_Q212) (Coxiella burnetii (strain Q212))).